Consider the following 188-residue polypeptide: MSVLPTPLANQLLIALPALSDPTFSRSVALICQHDENGAMGVLVNRPSEYTLGEVLSQMGIDTDDEPLREQIVLSGGPVHPERGFVIHDDAREWDSSLEVGQGVFLTTSRDILEAMAAGNGPRNVLVALGCAGWGAGQLEFELGENSWLTAPSDANVLFATALEDRWQTAAGRIGVDLFRLTDYSGHA.

The protein belongs to the UPF0301 (AlgH) family.

The protein is UPF0301 protein XOO1309 of Xanthomonas oryzae pv. oryzae (strain MAFF 311018).